The following is a 480-amino-acid chain: Protein nucleotidyltransferase YdiU (480 aa).

Residues glycine 87, glycine 89, arginine 90, lysine 110, aspartate 122, glycine 123, arginine 173, and arginine 180 each coordinate ATP. Residue aspartate 245 is the Proton acceptor of the active site. Mg(2+) contacts are provided by asparagine 246 and aspartate 255. An ATP-binding site is contributed by aspartate 255.

This sequence belongs to the SELO family. Mg(2+) is required as a cofactor. Mn(2+) serves as cofactor.

The catalysed reaction is L-seryl-[protein] + ATP = 3-O-(5'-adenylyl)-L-seryl-[protein] + diphosphate. It catalyses the reaction L-threonyl-[protein] + ATP = 3-O-(5'-adenylyl)-L-threonyl-[protein] + diphosphate. The enzyme catalyses L-tyrosyl-[protein] + ATP = O-(5'-adenylyl)-L-tyrosyl-[protein] + diphosphate. It carries out the reaction L-histidyl-[protein] + UTP = N(tele)-(5'-uridylyl)-L-histidyl-[protein] + diphosphate. The catalysed reaction is L-seryl-[protein] + UTP = O-(5'-uridylyl)-L-seryl-[protein] + diphosphate. It catalyses the reaction L-tyrosyl-[protein] + UTP = O-(5'-uridylyl)-L-tyrosyl-[protein] + diphosphate. Nucleotidyltransferase involved in the post-translational modification of proteins. It can catalyze the addition of adenosine monophosphate (AMP) or uridine monophosphate (UMP) to a protein, resulting in modifications known as AMPylation and UMPylation. In Jannaschia sp. (strain CCS1), this protein is Protein nucleotidyltransferase YdiU.